A 170-amino-acid chain; its full sequence is Adenine phosphoribosyltransferase (170 aa).

The protein belongs to the purine/pyrimidine phosphoribosyltransferase family. Homodimer.

Its subcellular location is the cytoplasm. It carries out the reaction AMP + diphosphate = 5-phospho-alpha-D-ribose 1-diphosphate + adenine. It participates in purine metabolism; AMP biosynthesis via salvage pathway; AMP from adenine: step 1/1. Functionally, catalyzes a salvage reaction resulting in the formation of AMP, that is energically less costly than de novo synthesis. This is Adenine phosphoribosyltransferase from Bacillus licheniformis (strain ATCC 14580 / DSM 13 / JCM 2505 / CCUG 7422 / NBRC 12200 / NCIMB 9375 / NCTC 10341 / NRRL NRS-1264 / Gibson 46).